Reading from the N-terminus, the 307-residue chain is Ribonuclease Z (307 aa).

Zn(2+)-binding residues include His62, His64, Asp66, His67, His139, Asp210, and His268. Residue Asp66 is the Proton acceptor of the active site.

The protein belongs to the RNase Z family. In terms of assembly, homodimer. Zn(2+) is required as a cofactor.

The catalysed reaction is Endonucleolytic cleavage of RNA, removing extra 3' nucleotides from tRNA precursor, generating 3' termini of tRNAs. A 3'-hydroxy group is left at the tRNA terminus and a 5'-phosphoryl group is left at the trailer molecule.. Zinc phosphodiesterase, which displays some tRNA 3'-processing endonuclease activity. Probably involved in tRNA maturation, by removing a 3'-trailer from precursor tRNA. This chain is Ribonuclease Z, found in Myxococcus xanthus (strain DK1622).